A 151-amino-acid chain; its full sequence is ALK and LTK ligand 2 (151 aa).

A signal peptide spans 1–25 (MRVSGRPMLLALLLLLSTVGDRGRA). 2 disulfides stabilise this stretch: C112-C148 and C126-C135.

The protein belongs to the ALKAL family. In terms of assembly, homodimer.

It is found in the secreted. The protein localises to the cell membrane. Functionally, cytokine that acts as a physiological ligand for receptor tyrosine kinases LTK and ALK, leading to their activation. Cytokine-binding is sufficient to activate LTK. In contrast, ALKAL2-driven activation of ALK is coupled with heparin-binding to ALK. Stimulation of ALK signaling is involved in neural development and regulation of energy expenditure. The protein is ALK and LTK ligand 2 of Mus musculus (Mouse).